The chain runs to 79 residues: Calcium/calmodulin-dependent protein kinase II inhibitor 2 (79 aa).

The inhibitory domain stretch occupies residues 43–69 (KRPPKLGQIGRAKRVVIEDDRIDEVLK).

It belongs to the CAMK2N family.

It localises to the nucleus. It is found in the cytoplasm. The protein localises to the cytosol. Its function is as follows. Potent and specific cellular inhibitor of CaM-kinase II (CAMK2). Traps Ca(2+)/calmodulin on CAMK2. In Xenopus laevis (African clawed frog), this protein is Calcium/calmodulin-dependent protein kinase II inhibitor 2 (camk2n2).